Here is a 200-residue protein sequence, read N- to C-terminus: Pyridoxal 5'-phosphate synthase subunit PdxT (200 aa).

52 to 54 (GES) is a binding site for L-glutamine. Catalysis depends on cysteine 84, which acts as the Nucleophile. L-glutamine contacts are provided by residues arginine 116 and 145–146 (IR). Residues histidine 181 and glutamate 183 each act as charge relay system in the active site.

Belongs to the glutaminase PdxT/SNO family. As to quaternary structure, in the presence of PdxS, forms a dodecamer of heterodimers. Only shows activity in the heterodimer.

It carries out the reaction aldehydo-D-ribose 5-phosphate + D-glyceraldehyde 3-phosphate + L-glutamine = pyridoxal 5'-phosphate + L-glutamate + phosphate + 3 H2O + H(+). The enzyme catalyses L-glutamine + H2O = L-glutamate + NH4(+). The protein operates within cofactor biosynthesis; pyridoxal 5'-phosphate biosynthesis. Functionally, catalyzes the hydrolysis of glutamine to glutamate and ammonia as part of the biosynthesis of pyridoxal 5'-phosphate. The resulting ammonia molecule is channeled to the active site of PdxS. The chain is Pyridoxal 5'-phosphate synthase subunit PdxT from Saccharolobus islandicus (strain Y.G.57.14 / Yellowstone #1) (Sulfolobus islandicus).